The chain runs to 225 residues: Ribosome maturation factor RimM (225 aa).

The region spanning 144–225 (ADEFYWVDLI…RIVVDWEADY (82 aa)) is the PRC barrel domain.

This sequence belongs to the RimM family. As to quaternary structure, binds ribosomal protein uS19.

The protein localises to the cytoplasm. Its function is as follows. An accessory protein needed during the final step in the assembly of 30S ribosomal subunit, possibly for assembly of the head region. Essential for efficient processing of 16S rRNA. May be needed both before and after RbfA during the maturation of 16S rRNA. It has affinity for free ribosomal 30S subunits but not for 70S ribosomes. In Burkholderia lata (strain ATCC 17760 / DSM 23089 / LMG 22485 / NCIMB 9086 / R18194 / 383), this protein is Ribosome maturation factor RimM.